The sequence spans 329 residues: Lipoyl synthase (329 aa).

The disordered stretch occupies residues 1-23; sequence MTDLTATPAPAEPAASAYDPTAK. 7 residues coordinate [4Fe-4S] cluster: Cys-76, Cys-81, Cys-87, Cys-102, Cys-106, Cys-109, and Ser-316. The region spanning 87 to 305 is the Radical SAM core domain; the sequence is CFGKGTATFM…EEEAYKMGFT (219 aa).

It belongs to the radical SAM superfamily. Lipoyl synthase family. Requires [4Fe-4S] cluster as cofactor.

It is found in the cytoplasm. It catalyses the reaction [[Fe-S] cluster scaffold protein carrying a second [4Fe-4S](2+) cluster] + N(6)-octanoyl-L-lysyl-[protein] + 2 oxidized [2Fe-2S]-[ferredoxin] + 2 S-adenosyl-L-methionine + 4 H(+) = [[Fe-S] cluster scaffold protein] + N(6)-[(R)-dihydrolipoyl]-L-lysyl-[protein] + 4 Fe(3+) + 2 hydrogen sulfide + 2 5'-deoxyadenosine + 2 L-methionine + 2 reduced [2Fe-2S]-[ferredoxin]. Its pathway is protein modification; protein lipoylation via endogenous pathway; protein N(6)-(lipoyl)lysine from octanoyl-[acyl-carrier-protein]: step 2/2. Catalyzes the radical-mediated insertion of two sulfur atoms into the C-6 and C-8 positions of the octanoyl moiety bound to the lipoyl domains of lipoate-dependent enzymes, thereby converting the octanoylated domains into lipoylated derivatives. In Burkholderia mallei (strain NCTC 10247), this protein is Lipoyl synthase.